Reading from the N-terminus, the 186-residue chain is Centromere protein M (186 aa).

It localises to the nucleus. It is found in the chromosome. The protein localises to the centromere. Its function is as follows. Probable component of a centromeric complex involved in assembly of kinetochore proteins, mitotic progression and chromosome segregation. The polypeptide is Centromere protein M (cenpm) (Danio rerio (Zebrafish)).